The sequence spans 142 residues: uncharacterized protein (142 aa).

One can recognise a Peptidase C39 domain in the interval 18 to 137 (QSSGYSCGPA…KIFTGNVLVV (120 aa)).

This is an uncharacterized protein from Methanothermobacter marburgensis (strain ATCC BAA-927 / DSM 2133 / JCM 14651 / NBRC 100331 / OCM 82 / Marburg) (Methanobacterium thermoautotrophicum).